Here is a 305-residue protein sequence, read N- to C-terminus: Transmembrane protein 74 (305 aa).

2 disordered regions span residues 52-88 and 123-143; these read ATEMEGSKLSSSPASPSSSLQNSTLQPDAFPPGLLHS and RNRSSPSAKGHNHPGELGWEN. Positions 58-78 are enriched in low complexity; sequence SKLSSSPASPSSSLQNSTLQP. 2 consecutive transmembrane segments (helical) span residues 178–198 and 232–252; these read FISAILFLVTGILLVIISYIV and VIAGLCLLTLGGVILSCLLMM.

It belongs to the TMEM74 family. Expressed in heart, lung, and placenta.

Its subcellular location is the lysosome membrane. It is found in the cytoplasmic vesicle. It localises to the autophagosome membrane. In terms of biological role, plays an essential role in autophagy. TMEM74-induced autophagy may involve PI3K signal transduction. The polypeptide is Transmembrane protein 74 (TMEM74) (Homo sapiens (Human)).